A 401-amino-acid chain; its full sequence is Bone morphogenetic protein 4 (401 aa).

The N-terminal stretch at 1-19 (MIPGNRMLMVILLSQVLLG) is a signal peptide. The propeptide occupies 20–287 (GTNYASLIPD…GHALTRRSKR (268 aa)). N-linked (GlcNAc...) asparagine glycosylation is found at asparagine 141, asparagine 204, and asparagine 238. Residues 279-299 (HALTRRSKRSPKQQRPRKKNK) are disordered. Residues 280 to 299 (ALTRRSKRSPKQQRPRKKNK) are compositionally biased toward basic residues. Intrachain disulfides connect cysteine 301–cysteine 366, cysteine 330–cysteine 398, and cysteine 334–cysteine 400. Asparagine 343 and asparagine 358 each carry an N-linked (GlcNAc...) asparagine glycan.

Belongs to the TGF-beta family. In terms of assembly, homodimer; disulfide-linked. Forms heterodimers with the TGF-beta family member derriere. Part of a complex consisting of twsg1 and chrd. Interacts with tsku.

Its subcellular location is the secreted. It is found in the extracellular space. The protein localises to the extracellular matrix. Posterior-ventralizing factor in Xenopus mesoderm induction. Induces posteroventral mesoderm and counteracts dorsalizing signals such as activin. This is Bone morphogenetic protein 4 (bmp4) from Xenopus laevis (African clawed frog).